A 597-amino-acid polypeptide reads, in one-letter code: Serine/arginine repetitive matrix protein 3 (597 aa).

The segment covering 1-31 (MSSTVNNGAASMQSTPDAANGFPQPSSSSGT) has biased composition (polar residues). Residues 1-47 (MSSTVNNGAASMQSTPDAANGFPQPSSSSGTWPRAEEELRAAEPGLV) form a disordered region. The CWF21 domain occupies 55–98 (LDHERKRRVELKCMELQEMMEEQGYSEEEIRQKVGTFRQMLMEK). Residues 99 to 109 (EGVLTREDRPG) show a composition bias toward basic and acidic residues. Residues 99 to 597 (EGVLTREDRP…GPAPLPPPAA (499 aa)) form a disordered region. 4 stretches are compositionally biased toward basic residues: residues 149 to 158 (RGHRGYRTKH), 168 to 186 (PKKK…KKRR), 199 to 211 (LRKK…KHRR), and 219 to 243 (RRKR…KKRP). Composition is skewed to low complexity over residues 257-278 (SGSS…PSRL) and 291-313 (SQRS…SPQR). 2 stretches are compositionally biased toward gly residues: residues 315 to 328 (GGSG…GGRP) and 374 to 383 (GRGGRAAGGA). Positions 384 to 412 (GRRRRRRRRRRRSRSSASAPRRRGRRRPR) are enriched in basic residues. Low complexity-rich tracts occupy residues 417-433 (RGSS…SDSG), 466-476 (RPASTSPSPGA), and 488-507 (SSRS…SPSK). Residues 530–549 (LSRDKDGEGRARHSEAEATR) show a composition bias toward basic and acidic residues. The span at 550-565 (ARRRSRSYSPIRKRRR) shows a compositional bias: basic residues.

It belongs to the CWC21 family. As to expression, expressed in breast cancer cell lines.

May play a role in regulating breast cancer cell invasiveness. May be involved in RYBP-mediated breast cancer progression. This chain is Serine/arginine repetitive matrix protein 3 (SRRM3), found in Homo sapiens (Human).